The chain runs to 351 residues: Heat-inducible transcription repressor HrcA (351 aa).

The protein belongs to the HrcA family.

Negative regulator of class I heat shock genes (grpE-dnaK-dnaJ and groELS operons). Prevents heat-shock induction of these operons. This chain is Heat-inducible transcription repressor HrcA, found in Clostridium tetani (strain Massachusetts / E88).